Here is a 76-residue protein sequence, read N- to C-terminus: Vasotab-TY3 (76 aa).

Positions 1 to 21 (MKFALFSVLVLMLIATFVAAD) are cleaved as a signal peptide. The Kazal-like domain occupies 22 to 76 (DCPRICTSDYTPVCGTPSGGRRSANRTFANQCGLDSHNCLNKGDTYDKLHDGECK). Cystine bridges form between Cys-23–Cys-60, Cys-27–Cys-53, and Cys-35–Cys-75.

In terms of tissue distribution, expressed by the salivary gland.

It is found in the secreted. Its function is as follows. Vasodilator protein that inhibits vasoconstriction of isolated rat femoral artery induced by phenylephrine. Since platelet aggregation and vasoconstriction are key hemostatic responses, particularly in small wounds, this protein likely participates in the antihemostatic responses during blood feeding. Blocks L-type calcium channels (Cav1/CACNA1) in left ventricular myocytes isolated from rat hearts. This chain is Vasotab-TY3, found in Tabanus yao (Horsefly).